We begin with the raw amino-acid sequence, 97 residues long: Aspartyl/glutamyl-tRNA(Asn/Gln) amidotransferase subunit C (97 aa).

The protein belongs to the GatC family. As to quaternary structure, heterotrimer of A, B and C subunits.

It carries out the reaction L-glutamyl-tRNA(Gln) + L-glutamine + ATP + H2O = L-glutaminyl-tRNA(Gln) + L-glutamate + ADP + phosphate + H(+). The enzyme catalyses L-aspartyl-tRNA(Asn) + L-glutamine + ATP + H2O = L-asparaginyl-tRNA(Asn) + L-glutamate + ADP + phosphate + 2 H(+). In terms of biological role, allows the formation of correctly charged Asn-tRNA(Asn) or Gln-tRNA(Gln) through the transamidation of misacylated Asp-tRNA(Asn) or Glu-tRNA(Gln) in organisms which lack either or both of asparaginyl-tRNA or glutaminyl-tRNA synthetases. The reaction takes place in the presence of glutamine and ATP through an activated phospho-Asp-tRNA(Asn) or phospho-Glu-tRNA(Gln). The sequence is that of Aspartyl/glutamyl-tRNA(Asn/Gln) amidotransferase subunit C from Prochlorococcus marinus subsp. pastoris (strain CCMP1986 / NIES-2087 / MED4).